Consider the following 237-residue polypeptide: Class B acid phosphatase (237 aa).

Positions 1–23 (MKKITLALSAVCLLFTLNHSANA) are cleaved as a signal peptide. The Nucleophile role is filled by aspartate 69. Mg(2+) contacts are provided by aspartate 69 and aspartate 71. The active-site Proton donor is aspartate 71. Residues 137–138 (TG) and lysine 177 each bind substrate. Aspartate 192 provides a ligand contact to Mg(2+).

It belongs to the class B bacterial acid phosphatase family. As to quaternary structure, homotetramer. It depends on Mg(2+) as a cofactor.

Its subcellular location is the periplasm. The catalysed reaction is a phosphate monoester + H2O = an alcohol + phosphate. In terms of biological role, dephosphorylates several organic phosphate monoesters. Also has a phosphotransferase activity catalyzing the transfer of low-energy phosphate groups from organic phosphate monoesters to free hydroxyl groups of various organic compounds. The sequence is that of Class B acid phosphatase from Salmonella arizonae (strain ATCC BAA-731 / CDC346-86 / RSK2980).